A 503-amino-acid polypeptide reads, in one-letter code: Arabinose import ATP-binding protein AraG 1 (503 aa).

ABC transporter domains are found at residues 5-240 and 253-497; these read LRFD…MVGR and LGDV…LPQG. 37-44 is a binding site for ATP; the sequence is GENGAGKS.

Belongs to the ABC transporter superfamily. Arabinose importer (TC 3.A.1.2.2) family. The complex is composed of two ATP-binding proteins (AraG), two transmembrane proteins (AraH) and a solute-binding protein (AraF).

The protein localises to the cell inner membrane. It catalyses the reaction L-arabinose(out) + ATP + H2O = L-arabinose(in) + ADP + phosphate + H(+). In terms of biological role, part of the ABC transporter complex AraFGH involved in arabinose import. Responsible for energy coupling to the transport system. The protein is Arabinose import ATP-binding protein AraG 1 of Burkholderia thailandensis (strain ATCC 700388 / DSM 13276 / CCUG 48851 / CIP 106301 / E264).